The primary structure comprises 92 residues: Small ribosomal subunit protein uS19c (92 aa).

This sequence belongs to the universal ribosomal protein uS19 family.

Its subcellular location is the plastid. The protein localises to the chloroplast. In terms of biological role, protein S19 forms a complex with S13 that binds strongly to the 16S ribosomal RNA. In Chloranthus spicatus (Chulantree), this protein is Small ribosomal subunit protein uS19c.